The sequence spans 289 residues: uncharacterized protein (289 aa).

This is an uncharacterized protein from Homo sapiens (Human).